Reading from the N-terminus, the 439-residue chain is GTPase Der (439 aa).

EngA-type G domains follow at residues 4–169 (AMVS…PQEE) and 177–352 (IKIA…EEYN). GTP contacts are provided by residues 10–17 (GRPNVGKS), 57–61 (DTGGL), 120–123 (NKVD), 183–190 (GKPNVGKS), 230–234 (DTAGI), and 295–298 (NKWD). The KH-like domain maps to 353–437 (KRITTGLLNN…PVVISTRKRG (85 aa)).

Belongs to the TRAFAC class TrmE-Era-EngA-EngB-Septin-like GTPase superfamily. EngA (Der) GTPase family. In terms of assembly, associates with the 50S ribosomal subunit.

Functionally, GTPase that plays an essential role in the late steps of ribosome biogenesis. This Thermoanaerobacter pseudethanolicus (strain ATCC 33223 / 39E) (Clostridium thermohydrosulfuricum) protein is GTPase Der.